The sequence spans 385 residues: AA13 family lytic polysaccharide monooxygenase aasA (385 aa).

The first 18 residues, 1 to 18 (MKSLLALVAGNLVTAVSG), serve as a signal peptide directing secretion. Position 19 (H19) interacts with Cu(2+). A Methylhistidine modification is found at H19. Residues 19–248 (HGYLTVPASR…AQVYLHCADI (230 aa)) are N-terminal catalytic module. 7 cysteine pairs are disulfide-bonded: C40/C43, C66/C245, C102/C203, C118/C145, C153/C161, C167/C173, and C181/C192. Residue H109 participates in Cu(2+) binding. N120 carries N-linked (GlcNAc...) asparagine glycosylation. Y242 contacts Cu(2+). Residues 254–276 (SGSSPSPTSTTSTATSTTTPSST) form a disordered region. The span at 256 to 276 (SSPSPTSTTSTATSTTTPSST) shows a compositional bias: low complexity. The CBM20 domain occupies 278 to 385 (CASAISIPVT…TTATESGAWR (108 aa)). N-linked (GlcNAc...) asparagine glycosylation occurs at N364.

It belongs to the polysaccharide monooxygenase AA13 family. It depends on Cu(2+) as a cofactor. In terms of processing, the catalytically essential N-terminal histidine His-19 is post-translationally modified by methylation to prevent protonation of the histidine side chain, and protect the critical active site of the enzyme from oxidative damage.

The protein localises to the secreted. It carries out the reaction starch + reduced acceptor + O2 = D-glucono-1,5-lactone-terminated malto-oligosaccharides + short-chain malto-oligosaccharides + acceptor + H2O.. Starch-active polysaccharide monooxygenase that oxidizes the C1 position of starch substrates, but not in cellulose, chitin, polygalacturonan or esterified pectin, nor with Arabidopsis stem cell walls. Catalysis by LPMOs requires the reduction of the active-site copper from Cu(II) to Cu(I) by a reducing agent and H(2)O(2) or O(2) as a cosubstrate. The sequence is that of AA13 family lytic polysaccharide monooxygenase aasA from Emericella nidulans (strain FGSC A4 / ATCC 38163 / CBS 112.46 / NRRL 194 / M139) (Aspergillus nidulans).